Consider the following 137-residue polypeptide: Putative pre-16S rRNA nuclease (137 aa).

The protein belongs to the YqgF nuclease family.

The protein resides in the cytoplasm. Its function is as follows. Could be a nuclease involved in processing of the 5'-end of pre-16S rRNA. This Bacillus cereus (strain B4264) protein is Putative pre-16S rRNA nuclease.